The following is a 96-amino-acid chain: Small ribosomal subunit protein bS18 (96 aa).

Basic residues predominate over residues 1–18 (MPPPRGKGRFGKDKRPKR). The tract at residues 1–21 (MPPPRGKGRFGKDKRPKRNTQ) is disordered.

Belongs to the bacterial ribosomal protein bS18 family. Part of the 30S ribosomal subunit. Forms a tight heterodimer with protein bS6.

Its function is as follows. Binds as a heterodimer with protein bS6 to the central domain of the 16S rRNA, where it helps stabilize the platform of the 30S subunit. In Methylibium petroleiphilum (strain ATCC BAA-1232 / LMG 22953 / PM1), this protein is Small ribosomal subunit protein bS18.